Consider the following 388-residue polypeptide: Alcohol dehydrogenase-like 1 (388 aa).

Residues C53, T55, H76, C106, C109, C112, C120, and C185 each contribute to the Zn(2+) site. Residues T55 and H76 each coordinate an alcohol. T55 is an NAD(+) binding site. NAD(+) contacts are provided by residues G210 to G215, D234, K239, L304 to M306, F331, and R381.

Belongs to the zinc-containing alcohol dehydrogenase family. Class-III subfamily. In terms of assembly, homodimer. Zn(2+) serves as cofactor.

The protein localises to the cytoplasm. The enzyme catalyses a primary alcohol + NAD(+) = an aldehyde + NADH + H(+). It catalyses the reaction a secondary alcohol + NAD(+) = a ketone + NADH + H(+). This chain is Alcohol dehydrogenase-like 1, found in Arabidopsis thaliana (Mouse-ear cress).